Consider the following 427-residue polypeptide: Mitochondrial fission protein ELM1 (427 aa).

In terms of assembly, interacts with DRP3 and DRP3B.

Its subcellular location is the mitochondrion outer membrane. Its function is as follows. Plant-specific factor involved in mitochondria fission. Is required for the correct localization of DRP3A from the cytosol to mitochondrial fission sites. Does not seem to be required for peroxisomal division. The protein is Mitochondrial fission protein ELM1 (ELM1) of Arabidopsis thaliana (Mouse-ear cress).